The chain runs to 170 residues: Urease accessory protein UreE (170 aa).

It belongs to the UreE family.

Its subcellular location is the cytoplasm. Involved in urease metallocenter assembly. Binds nickel. Probably functions as a nickel donor during metallocenter assembly. In Helicobacter pylori (strain J99 / ATCC 700824) (Campylobacter pylori J99), this protein is Urease accessory protein UreE.